The following is a 73-amino-acid chain: MTNMTNQISNNTGSVQSQVRFLTDRIQKLSRHLGTHKKDFSCQRSIRKLLIKRKRLLLYLYKKDKTGYNQVKS.

This sequence belongs to the universal ribosomal protein uS15 family. Part of the 30S ribosomal subunit.

The protein localises to the plastid. The protein resides in the chloroplast. The protein is Small ribosomal subunit protein uS15c (rps15) of Welwitschia mirabilis (Tree tumbo).